Reading from the N-terminus, the 192-residue chain is Protein GrpE (192 aa).

Residues 1–43 (MQENKQPSEIQGELPQPPDGESVPPQPTNEQAPPDTDTMPRIE) form a disordered region.

The protein belongs to the GrpE family. Homodimer.

Its subcellular location is the cytoplasm. Participates actively in the response to hyperosmotic and heat shock by preventing the aggregation of stress-denatured proteins, in association with DnaK and GrpE. It is the nucleotide exchange factor for DnaK and may function as a thermosensor. Unfolded proteins bind initially to DnaJ; upon interaction with the DnaJ-bound protein, DnaK hydrolyzes its bound ATP, resulting in the formation of a stable complex. GrpE releases ADP from DnaK; ATP binding to DnaK triggers the release of the substrate protein, thus completing the reaction cycle. Several rounds of ATP-dependent interactions between DnaJ, DnaK and GrpE are required for fully efficient folding. This Aromatoleum aromaticum (strain DSM 19018 / LMG 30748 / EbN1) (Azoarcus sp. (strain EbN1)) protein is Protein GrpE.